The chain runs to 449 residues: UDP-N-acetylmuramate--L-alanine ligase (449 aa).

110 to 116 (GTHGKTT) is a binding site for ATP.

It belongs to the MurCDEF family.

The protein localises to the cytoplasm. The catalysed reaction is UDP-N-acetyl-alpha-D-muramate + L-alanine + ATP = UDP-N-acetyl-alpha-D-muramoyl-L-alanine + ADP + phosphate + H(+). The protein operates within cell wall biogenesis; peptidoglycan biosynthesis. In terms of biological role, cell wall formation. This Desulfitobacterium hafniense (strain Y51) protein is UDP-N-acetylmuramate--L-alanine ligase.